Consider the following 454-residue polypeptide: uncharacterized protein (454 aa).

Position 125–132 (125–132 (GDVGCGKT)) interacts with ATP.

Belongs to the AFG1 ATPase family.

This is an uncharacterized protein from Schizosaccharomyces pombe (strain 972 / ATCC 24843) (Fission yeast).